Reading from the N-terminus, the 1412-residue chain is Probable phosphatidylinositol 4-kinase STT4 homolog (1412 aa).

The region spanning 878–1055 (SMETNGFYRF…GTFVRCIEEI (178 aa)) is the PIK helical domain. A pleckstrin homology (PH) domain conferring phosphoinositide binding specificity region spans residues 1056–1163 (MKEMPDGSRD…ISIKQLIFKS (108 aa)). Positions 1127–1396 (NGSARALQSH…LIAESSQKFR (270 aa)) constitute a PI3K/PI4K catalytic domain. Positions 1133-1139 (LQSHSKV) are G-loop. A catalytic loop region spans residues 1266 to 1274 (NIKDRHNGN). Residues 1285–1308 (HIDFGYMLEMSPGNLNIEAPLKLT) are activation loop.

This sequence belongs to the PI3/PI4-kinase family. Type III PI4K subfamily.

The protein resides in the cytoplasm. It catalyses the reaction a 1,2-diacyl-sn-glycero-3-phospho-(1D-myo-inositol) + ATP = a 1,2-diacyl-sn-glycero-3-phospho-(1D-myo-inositol 4-phosphate) + ADP + H(+). Acts on phosphatidylinositol (PI) in the first committed step in the production of the second messenger inositol 1,4,5,-trisphosphate. The chain is Probable phosphatidylinositol 4-kinase STT4 homolog (STT4) from Encephalitozoon cuniculi (strain GB-M1) (Microsporidian parasite).